Here is a 116-residue protein sequence, read N- to C-terminus: Large ribosomal subunit protein bL17 (116 aa).

Belongs to the bacterial ribosomal protein bL17 family. As to quaternary structure, part of the 50S ribosomal subunit. Contacts protein L32.

This is Large ribosomal subunit protein bL17 from Dictyoglomus turgidum (strain DSM 6724 / Z-1310).